Here is a 428-residue protein sequence, read N- to C-terminus: Putative aspergillopepsin A-like aspartic endopeptidase AFUA_2G15950 (428 aa).

The N-terminal stretch at 1-19 (MHSLQSFLFLLLLGYGVFA) is a signal peptide. Residues 20 to 90 (APTSPQAQSQ…GTAANLVTDV (71 aa)) constitute a propeptide, activation peptide. The Peptidase A1 domain occupies 110 to 425 (FVSPVTIGGQ…DLRGPSIGLA (316 aa)). Asp-126 is a catalytic residue. The N-linked (GlcNAc...) asparagine glycan is linked to Asn-276. Residue Asp-312 is part of the active site. A glycan (N-linked (GlcNAc...) asparagine) is linked at Asn-380.

Belongs to the peptidase A1 family.

It is found in the secreted. The sequence is that of Putative aspergillopepsin A-like aspartic endopeptidase AFUA_2G15950 from Aspergillus fumigatus (strain ATCC MYA-4609 / CBS 101355 / FGSC A1100 / Af293) (Neosartorya fumigata).